Reading from the N-terminus, the 524-residue chain is Cytochrome P450 52A6 (524 aa).

Residues Trp-17–Ile-34 form a helical membrane-spanning segment. A heme-binding site is contributed by Cys-472.

It belongs to the cytochrome P450 family. It depends on heme as a cofactor.

The protein localises to the membrane. Functionally, together with an NADPH cytochrome P450 the enzyme system catalyzes the terminal hydroxylation as the first step in the assimilation of alkanes and fatty acids. Preferentially hydroxylates hexadecane. The sequence is that of Cytochrome P450 52A6 (CYP52A6) from Candida tropicalis (Yeast).